The sequence spans 84 residues: ATP synthase subunit c (84 aa).

The next 2 membrane-spanning stretches (helical) occupy residues 9-29 (IIGA…GFAI) and 54-74 (IVAG…LLFI).

The protein belongs to the ATPase C chain family. As to quaternary structure, F-type ATPases have 2 components, F(1) - the catalytic core - and F(0) - the membrane proton channel. F(1) has five subunits: alpha(3), beta(3), gamma(1), delta(1), epsilon(1). F(0) has three main subunits: a(1), b(2) and c(10-14). The alpha and beta chains form an alternating ring which encloses part of the gamma chain. F(1) is attached to F(0) by a central stalk formed by the gamma and epsilon chains, while a peripheral stalk is formed by the delta and b chains.

It localises to the cell inner membrane. Its function is as follows. F(1)F(0) ATP synthase produces ATP from ADP in the presence of a proton or sodium gradient. F-type ATPases consist of two structural domains, F(1) containing the extramembraneous catalytic core and F(0) containing the membrane proton channel, linked together by a central stalk and a peripheral stalk. During catalysis, ATP synthesis in the catalytic domain of F(1) is coupled via a rotary mechanism of the central stalk subunits to proton translocation. In terms of biological role, key component of the F(0) channel; it plays a direct role in translocation across the membrane. A homomeric c-ring of between 10-14 subunits forms the central stalk rotor element with the F(1) delta and epsilon subunits. This is ATP synthase subunit c from Haemophilus influenzae (strain ATCC 51907 / DSM 11121 / KW20 / Rd).